A 758-amino-acid polypeptide reads, in one-letter code: Ribosomal RNA processing protein 1 homolog B (758 aa).

The residue at position 245 (Ser-245) is a Phosphoserine. Residues 259–272 show a composition bias toward basic residues; sequence AVSKKKTALGKNHS. Residues 259-285 are disordered; sequence AVSKKKTALGKNHSRKDGLSDERGRDD. The span at 273-285 shows a compositional bias: basic and acidic residues; that stretch reads RKDGLSDERGRDD. Phosphoserine occurs at positions 350, 392, 394, and 395. The interval 381-598 is disordered; sequence GSRVFCVEEE…KTASLKKRKK (218 aa). The span at 397 to 408 shows a compositional bias: basic residues; it reads QKRRRKKKKKHH. The segment covering 447–457 has biased composition (low complexity); sequence GAEATSSTGEE. Residues Ser-452 and Ser-458 each carry the phosphoserine modification. Basic residues predominate over residues 469–481; sequence HNKRKRPRKKSPR. A compositionally biased stretch (low complexity) spans 498 to 513; the sequence is SQSGPSGSHPQGPRGS. The residue at position 513 (Ser-513) is a Phosphoserine. Basic residues predominate over residues 566 to 575; that stretch reads QRRRLQKKKA. Position 579 is a phosphoserine (Ser-579). Lys-652 is modified (N6-acetyllysine). The segment at 660-681 is disordered; that stretch reads KSSTATHPPGPAVQLNKTPSSS. Ser-702 and Ser-706 each carry phosphoserine. Positions 707–758 are disordered; sequence PTGPSRVAFDPEQKPLHGVLKTPTSSPASSPLVAKKPLTTTPRRRPRAMDFF. Arg-712 bears the Citrulline mark. Phosphothreonine is present on Thr-728. Ser-732, Ser-735, and Ser-736 each carry phosphoserine.

The protein belongs to the RRP1 family. As to quaternary structure, interacts with the transcriptional activator E2F1. Interacts with serine/threonine-protein phosphatase PP1 subunits PPP1CB and PPP1CC but not with PPP1CA. Interacts with 60S ribosomal proteins RPL5 and RPL27, ribosomal processing protein RRP1/NNP1 and other nucleolar proteins including NOP2/NOL1 and FBL. Also interacts with nucleolar protein NPM1/B23. Interacts with splicing factor SRSF1 and with LUC7L3/CROP. Interacts with GTPase activator SIPA1. Interacts with CBX5/HP1alpha, H1-10, NCL, PARP1, TRIM28 and YBX3. (Microbial infection) Interacts with influenza A virus nucleoprotein NP and with RNA-directed RNA polymerase subunits PB1 and PB2. In terms of processing, citrullinated by PADI4.

It localises to the nucleus. The protein localises to the nucleolus. Its subcellular location is the nucleoplasm. It is found in the chromosome. Positively regulates DNA damage-induced apoptosis by acting as a transcriptional coactivator of proapoptotic target genes of the transcriptional activator E2F1. Likely to play a role in ribosome biogenesis by targeting serine/threonine protein phosphatase PP1 to the nucleolus. Involved in regulation of mRNA splicing. Inhibits SIPA1 GTPase activity. Involved in regulating expression of extracellular matrix genes. Associates with chromatin and may play a role in modulating chromatin structure. Its function is as follows. (Microbial infection) Following influenza A virus (IAV) infection, promotes viral mRNA transcription by facilitating the binding of IAV RNA-directed RNA polymerase to capped mRNA. The chain is Ribosomal RNA processing protein 1 homolog B (RRP1B) from Homo sapiens (Human).